The chain runs to 97 residues: Co-chaperonin GroES (97 aa).

The protein belongs to the GroES chaperonin family. As to quaternary structure, heptamer of 7 subunits arranged in a ring. Interacts with the chaperonin GroEL.

It is found in the cytoplasm. In terms of biological role, together with the chaperonin GroEL, plays an essential role in assisting protein folding. The GroEL-GroES system forms a nano-cage that allows encapsulation of the non-native substrate proteins and provides a physical environment optimized to promote and accelerate protein folding. GroES binds to the apical surface of the GroEL ring, thereby capping the opening of the GroEL channel. The sequence is that of Co-chaperonin GroES from Azotobacter vinelandii (strain DJ / ATCC BAA-1303).